A 313-amino-acid polypeptide reads, in one-letter code: Ubiquitin-conjugating enzyme E2 Z (313 aa).

The UBC core domain maps to glutamine 58–valine 212. Cysteine 147 functions as the Glycyl thioester intermediate in the catalytic mechanism. The tract at residues valine 283–proline 313 is disordered. Positions aspartate 297–proline 313 are enriched in low complexity.

This sequence belongs to the ubiquitin-conjugating enzyme family.

Its subcellular location is the cytoplasm. It localises to the nucleus. It carries out the reaction S-ubiquitinyl-[E1 ubiquitin-activating enzyme]-L-cysteine + [E2 ubiquitin-conjugating enzyme]-L-cysteine = [E1 ubiquitin-activating enzyme]-L-cysteine + S-ubiquitinyl-[E2 ubiquitin-conjugating enzyme]-L-cysteine.. It functions in the pathway protein modification; protein ubiquitination. In terms of biological role, catalyzes the covalent attachment of ubiquitin to other proteins. May be involved in apoptosis regulation. This is Ubiquitin-conjugating enzyme E2 Z (ube2z) from Xenopus tropicalis (Western clawed frog).